The following is a 320-amino-acid chain: Cytochrome f (320 aa).

A signal peptide spans 1 to 35; that stretch reads MENRNTFSWVKEQMTRSISVSIMIYVITQTSISNA. Heme contacts are provided by Y36, C56, C59, and H60. The chain crosses the membrane as a helical span at residues 286-306; that stretch reads VQGLLFFFASVILAQVFLVLK.

Belongs to the cytochrome f family. As to quaternary structure, the 4 large subunits of the cytochrome b6-f complex are cytochrome b6, subunit IV (17 kDa polypeptide, petD), cytochrome f and the Rieske protein, while the 4 small subunits are PetG, PetL, PetM and PetN. The complex functions as a dimer. Heme serves as cofactor.

It is found in the plastid. Its subcellular location is the chloroplast thylakoid membrane. Functionally, component of the cytochrome b6-f complex, which mediates electron transfer between photosystem II (PSII) and photosystem I (PSI), cyclic electron flow around PSI, and state transitions. This chain is Cytochrome f, found in Agrostis stolonifera (Creeping bentgrass).